The sequence spans 278 residues: 2-heptyl-3-hydroxy-4-quinolone dioxygenase AqdC1 (278 aa).

Residues 29-158 (PTIVMLPGWC…GWVDSCRALF (130 aa)) enclose the AB hydrolase-1 domain. Residue H103 coordinates substrate. H250 functions as the Proton donor/acceptor in the catalytic mechanism.

The protein belongs to the AB hydrolase superfamily.

The enzyme catalyses 2-heptyl-3-hydroxy-4(1H)-quinolone + O2 = N-octanoylanthranilate + CO + H(+). Involved in the degradation of the Pseudomonas aeruginosa quorum sensing signal molecules HHQ (2-heptyl-4-quinolone) and PQS (2-heptyl-3-hydroxy-4-quinolone) to anthranilic acid. Catalyzes the cleavage of PQS to form N-octanoylanthranilic acid and carbon monoxide. The protein is 2-heptyl-3-hydroxy-4-quinolone dioxygenase AqdC1 of Rhodococcus erythropolis (Arthrobacter picolinophilus).